The sequence spans 362 residues: Phosphoserine aminotransferase (362 aa).

L-glutamate is bound at residue arginine 42. Residues 76–77, tryptophan 102, threonine 153, aspartate 174, and glutamine 197 each bind pyridoxal 5'-phosphate; that span reads AR. Lysine 198 carries the N6-(pyridoxal phosphate)lysine modification. 239–240 is a pyridoxal 5'-phosphate binding site; sequence NT.

It belongs to the class-V pyridoxal-phosphate-dependent aminotransferase family. SerC subfamily. In terms of assembly, homodimer. It depends on pyridoxal 5'-phosphate as a cofactor.

It is found in the cytoplasm. It catalyses the reaction O-phospho-L-serine + 2-oxoglutarate = 3-phosphooxypyruvate + L-glutamate. The catalysed reaction is 4-(phosphooxy)-L-threonine + 2-oxoglutarate = (R)-3-hydroxy-2-oxo-4-phosphooxybutanoate + L-glutamate. Its pathway is amino-acid biosynthesis; L-serine biosynthesis; L-serine from 3-phospho-D-glycerate: step 2/3. It functions in the pathway cofactor biosynthesis; pyridoxine 5'-phosphate biosynthesis; pyridoxine 5'-phosphate from D-erythrose 4-phosphate: step 3/5. Functionally, catalyzes the reversible conversion of 3-phosphohydroxypyruvate to phosphoserine and of 3-hydroxy-2-oxo-4-phosphonooxybutanoate to phosphohydroxythreonine. This is Phosphoserine aminotransferase from Xenorhabdus nematophila (strain ATCC 19061 / DSM 3370 / CCUG 14189 / LMG 1036 / NCIMB 9965 / AN6).